The chain runs to 169 residues: Putative lipocalin R877 (169 aa).

An N-terminal signal peptide occupies residues 1 to 18 (MWIIILIVIIVIITIIFS).

This sequence belongs to the calycin superfamily. Lipocalin family.

It localises to the secreted. Its subcellular location is the virion. Its function is as follows. Could play a role in the transport of a small ligand. The protein is Putative lipocalin R877 of Acanthamoeba polyphaga mimivirus (APMV).